A 512-amino-acid chain; its full sequence is GMP synthase [glutamine-hydrolyzing] (512 aa).

Positions 3 to 196 constitute a Glutamine amidotransferase type-1 domain; it reads NILILDFGSQ…VKHICQTSET (194 aa). The active-site Nucleophile is C80. Active-site residues include H169 and E171. The GMPS ATP-PPase domain maps to 197–387; that stretch reads WKIETIEKQL…LGLPDVLISR (191 aa). Residue 225 to 231 coordinates ATP; sequence SGGVDSS.

Homodimer.

It catalyses the reaction XMP + L-glutamine + ATP + H2O = GMP + L-glutamate + AMP + diphosphate + 2 H(+). Its pathway is purine metabolism; GMP biosynthesis; GMP from XMP (L-Gln route): step 1/1. Catalyzes the synthesis of GMP from XMP. The protein is GMP synthase [glutamine-hydrolyzing] (guaA) of Chlamydia muridarum (strain MoPn / Nigg).